Reading from the N-terminus, the 178-residue chain is N-alpha-acetyltransferase 80 (178 aa).

The region spanning 26-178 (VPIHNYPELM…AKKKYMKKVL (153 aa)) is the N-acetyltransferase domain. Substrate contacts are provided by residues Arg-48, 53–56 (RMRS), Asn-88, and Ser-98. Residues 99 to 101 (VVV) and 107 to 112 (GQGFGK) each bind acetyl-CoA. Residue Ser-134 participates in substrate binding. Gln-138 serves as a coordination point for acetyl-CoA.

The protein belongs to the acetyltransferase family.

The catalysed reaction is N-terminal L-aspartyl-L-aspartyl-L-aspartyl-[protein] + acetyl-CoA = N-terminal N-acetyl-L-aspartyl-L-aspartyl-L-aspartyl-[protein] + CoA + H(+). The enzyme catalyses N-terminal L-glutamyl-L-glutamyl-L-glutamyl-[protein] + acetyl-CoA = N-terminal N-acetyl-L-glutamyl-L-glutamyl-L-glutamyl-[protein] + CoA + H(+). In terms of biological role, N-alpha-acetyltransferase that acetylates the amino terminal acidic residue of proteins devoid of initiator methionine. Preferentially acts on proteins starting with Asp-Asp-Asp and Glu-Glu-Glu sequences. In vitro, shows high activity towards N-terminal sequences starting with Met-Asp-Glu-Leu, Met-Glu-Glu-Glu and Met-Asp-Asp-Asp. This chain is N-alpha-acetyltransferase 80, found in Drosophila melanogaster (Fruit fly).